The sequence spans 443 residues: Phenylalanine--tRNA ligase alpha subunit (443 aa).

Residues Thr-332, 375-377 (QVE), and Tyr-415 each bind L-phenylalanine. Glu-417 provides a ligand contact to Mg(2+). Residue Phe-441 coordinates L-phenylalanine.

It belongs to the class-II aminoacyl-tRNA synthetase family. Phe-tRNA synthetase alpha subunit type 2 subfamily. Heterotetramer; dimer of two heterodimers formed by FARSA and FARSB. The cofactor is Mg(2+).

The protein localises to the cytoplasm. It catalyses the reaction tRNA(Phe) + L-phenylalanine + ATP = L-phenylalanyl-tRNA(Phe) + AMP + diphosphate + H(+). In Gallus gallus (Chicken), this protein is Phenylalanine--tRNA ligase alpha subunit (FARSA).